The sequence spans 392 residues: Nuclear speckle splicing regulatory protein 1 homolog (392 aa).

Disordered stretches follow at residues 1-73 (MASK…IFDY), 113-169 (RQLE…AFND), and 187-357 (LLND…ARLD). 5 stretches are compositionally biased toward basic and acidic residues: residues 54–65 (KAAEREHQKAEA), 113–132 (RQLE…REKE), 149–160 (KQQEEVKKHREQ), 205–238 (QKNV…KSIY), and 313–357 (KSIE…ARLD). Residues 76–132 (NYDEIQAIKNEKKEEARKADKNRESKYAENIIKAHARRQLEQFSREERQQLREREKE) adopt a coiled-coil conformation.

This sequence belongs to the NSRP1 family. As to expression, expressed in the intestine, nervous system and head neurons in both larvae and adults. Expressed in the distal tip cell.

The protein resides in the cytoplasm. The protein localises to the nucleus. Required for the cessation of distal tip cell migration at the end of larval morphogenesis. This Caenorhabditis elegans protein is Nuclear speckle splicing regulatory protein 1 homolog (ccdc-55).